The primary structure comprises 131 residues: Profilin-1 (131 aa).

This sequence belongs to the profilin family. In terms of assembly, occurs in many kinds of cells as a complex with monomeric actin in a 1:1 ratio.

It localises to the cytoplasm. The protein localises to the cytoskeleton. In terms of biological role, binds to actin and affects the structure of the cytoskeleton. At high concentrations, profilin prevents the polymerization of actin, whereas it enhances it at low concentrations. By binding to PIP2, it inhibits the formation of IP3 and DG. The protein is Profilin-1 (PRO1) of Ricinus communis (Castor bean).